The chain runs to 317 residues: Ribonuclease Z (317 aa).

Positions 63, 65, 67, 68, 143, 213, and 273 each coordinate Zn(2+). The Proton acceptor role is filled by Asp-67.

Belongs to the RNase Z family. In terms of assembly, homodimer. The cofactor is Zn(2+).

It carries out the reaction Endonucleolytic cleavage of RNA, removing extra 3' nucleotides from tRNA precursor, generating 3' termini of tRNAs. A 3'-hydroxy group is left at the tRNA terminus and a 5'-phosphoryl group is left at the trailer molecule.. Zinc phosphodiesterase, which displays some tRNA 3'-processing endonuclease activity. Probably involved in tRNA maturation, by removing a 3'-trailer from precursor tRNA. The sequence is that of Ribonuclease Z from Methanocaldococcus jannaschii (strain ATCC 43067 / DSM 2661 / JAL-1 / JCM 10045 / NBRC 100440) (Methanococcus jannaschii).